Consider the following 1512-residue polypeptide: ATP-dependent permease YOR1 (1512 aa).

A disordered region spans residues 1–68 (MSPLLPTHWG…KGMKETEDGG (68 aa)). Polar residues predominate over residues 13-29 (APQNEPTLPSPSHSVST). A compositionally biased stretch (basic and acidic residues) spans 31–65 (VGDEEKLRRSEGSDGEDRINLDSNKYDVKGMKETE). 5 helical membrane passes run 229-249 (ASLAMSLLDVFGWFFMSAGFI), 288-308 (GPGIGAAIGLLLLLICSSLGM), 363-385 (FAAGFSHMLWTAPVQMIVIIIIL), 475-495 (GMTAIAMSLPILAAILSFITY), and 507-527 (IFTVITLFNLMRMPLMMWPMT). The ABC transmembrane type-1 1 domain occupies 246–533 (AGFIKVFGDT…WPMTLSSTAD (288 aa)). The segment at 594–656 (VLNGGKPGGP…SAPGIDEEIS (63 aa)) is disordered. Positions 619 to 643 (AEEIQAETAAGQPGAGEASAEGQGQ) are enriched in low complexity. Residues 651 to 871 (IDEEISEKKE…NGAFAKLIKE (221 aa)) form the ABC transporter 1 domain. 683-690 (GAIGSGKS) lines the ATP pocket. The next 4 helical transmembrane spans lie at 937-957 (GVFMLPLLFFCIVVAQSFYVI), 974-994 (NGFYMGIYAGLGVGLAIALFF), 1067-1087 (VILLAIIEPYFLIAMAVVSLL), and 1167-1187 (FLGSLLSFSVAIIVVCSSSVS). Residues 943-1217 (LLFFCIVVAQ…LVRQIAEVEN (275 aa)) form the ABC transmembrane type-1 2 domain. One can recognise an ABC transporter 2 domain in the interval 1255-1496 (IEFKDVRMRY…GGIFTEMCSK (242 aa)). 1289 to 1296 (GRTGAGKS) provides a ligand contact to ATP.

It belongs to the ABC transporter superfamily. ABCC family. Conjugate transporter (TC 3.A.1.208) subfamily.

Its subcellular location is the extracellular vesicle membrane. It is found in the secreted. Its function is as follows. Transmembrane transporter. May play a role in the packaging or formation of extracellular vesicles (EVs), and in the export of virulence factors from EVs. Required for efficient non-lytic exocytosis from host macrophages, the process by which the yeast escapes host macrophages with both host cell and pathogen remaining viable. The chain is ATP-dependent permease YOR1 from Cryptococcus neoformans var. grubii serotype A (strain H99 / ATCC 208821 / CBS 10515 / FGSC 9487) (Filobasidiella neoformans var. grubii).